We begin with the raw amino-acid sequence, 343 residues long: F17b-G fimbrial adhesin (343 aa).

An N-terminal signal peptide occupies residues 1–22 (MTNFYKVFLAVFILVCCNISHA). A receptor-binding lectin domain region spans residues 23 to 199 (VVSFIGSTEN…LNPFTLNDTV (177 aa)). A carbohydrate is bound by residues 65–66 (AN), 110–111 (DT), and 138–141 (STQG). An intrachain disulfide couples cysteine 75 to cysteine 132. Residues 200 to 343 (TSCRLLTPSA…GISTFTFSYQ (144 aa)) are fimbrillin-binding domain. Positions 287–307 (LKFGPDSPVKGNENQWQLSTG) are disordered. Residues 298 to 307 (NENQWQLSTG) show a composition bias toward polar residues.

This sequence belongs to the fimbrial protein family.

It localises to the fimbrium. In terms of biological role, essential fimbrial adhesion factor that mediates binding to N-acetylglucosamine-containing receptors in the host intestinal microvilli, leading to colonization of the intestinal tissue, and diarrhea or septicemia. Also confers adhesiveness to laminin and basement membranes. In Escherichia coli, this protein is F17b-G fimbrial adhesin (f17bG).